The sequence spans 193 residues: Putative manganese efflux pump MntP (193 aa).

A run of 6 helical transmembrane segments spans residues 6-26 (VIFIALGLSADCFAVSIGIAC), 48-68 (AGMVVIGFFAGLSVIDIISAF), 71-91 (WIAFGLLLFIGVRMIYEALQG), 108-128 (LLGVAVATSIDALAVGLAFAV), 132-152 (NIGLAALLIGLVSLTVSFLGF), and 165-185 (WVGVAGGLVLVFIGLKILAEH).

It belongs to the MntP (TC 9.B.29) family.

The protein resides in the cell membrane. In terms of biological role, probably functions as a manganese efflux pump. The chain is Putative manganese efflux pump MntP from Dehalococcoides mccartyi (strain ATCC BAA-2100 / JCM 16839 / KCTC 5957 / BAV1).